A 214-amino-acid polypeptide reads, in one-letter code: Osteoclast-stimulating factor 1 (214 aa).

The residue at position 2 (Ser2) is an N-acetylserine. The region spanning Gly12–Glu71 is the SH3 domain. 3 ANK repeats span residues Ser72–Gly101, Ala105–Gln135, and Leu139–Leu168. Residue Thr200 is modified to Phosphothreonine. A phosphoserine mark is found at Ser202 and Ser213.

As to quaternary structure, interacts with SRC and SMN1. Interacts with FASLG.

The protein resides in the cytoplasm. Its function is as follows. Induces bone resorption, acting probably through a signaling cascade which results in the secretion of factor(s) enhancing osteoclast formation and activity. This Rattus norvegicus (Rat) protein is Osteoclast-stimulating factor 1 (Ostf1).